The sequence spans 314 residues: tRNA-cytidine(32) 2-sulfurtransferase (314 aa).

The PP-loop motif motif lies at 39–44 (SGGKDS). Positions 114, 117, and 205 each coordinate [4Fe-4S] cluster.

The protein belongs to the TtcA family. As to quaternary structure, homodimer. Mg(2+) is required as a cofactor. The cofactor is [4Fe-4S] cluster.

Its subcellular location is the cytoplasm. It catalyses the reaction cytidine(32) in tRNA + S-sulfanyl-L-cysteinyl-[cysteine desulfurase] + AH2 + ATP = 2-thiocytidine(32) in tRNA + L-cysteinyl-[cysteine desulfurase] + A + AMP + diphosphate + H(+). It functions in the pathway tRNA modification. Its function is as follows. Catalyzes the ATP-dependent 2-thiolation of cytidine in position 32 of tRNA, to form 2-thiocytidine (s(2)C32). The sulfur atoms are provided by the cysteine/cysteine desulfurase (IscS) system. In Cupriavidus necator (strain ATCC 17699 / DSM 428 / KCTC 22496 / NCIMB 10442 / H16 / Stanier 337) (Ralstonia eutropha), this protein is tRNA-cytidine(32) 2-sulfurtransferase.